Here is a 313-residue protein sequence, read N- to C-terminus: Methionyl-tRNA formyltransferase (313 aa).

113-116 (SLLP) contributes to the (6S)-5,6,7,8-tetrahydrofolate binding site.

It belongs to the Fmt family.

The enzyme catalyses L-methionyl-tRNA(fMet) + (6R)-10-formyltetrahydrofolate = N-formyl-L-methionyl-tRNA(fMet) + (6S)-5,6,7,8-tetrahydrofolate + H(+). In terms of biological role, attaches a formyl group to the free amino group of methionyl-tRNA(fMet). The formyl group appears to play a dual role in the initiator identity of N-formylmethionyl-tRNA by promoting its recognition by IF2 and preventing the misappropriation of this tRNA by the elongation apparatus. In Francisella tularensis subsp. mediasiatica (strain FSC147), this protein is Methionyl-tRNA formyltransferase.